Reading from the N-terminus, the 1526-residue chain is Probable autotransporter YpjA (1526 aa).

Positions 1–29 (MNRTSPYYCRRSVLSLLISALIYAPPGMA) are cleaved as a signal peptide. The segment at 1173–1223 (NSNWNLTNDVKPNPDPIPNPKPDPKPDPKPDPNPKPDPTPDPTPTPVPEKR) is disordered. A compositionally biased stretch (basic and acidic residues) spans 1194 to 1206 (PDPKPDPKPDPNP). The span at 1207 to 1219 (KPDPTPDPTPTPV) shows a compositional bias: pro residues. Residues 1258-1526 (ASPHNNNVWG…NAVAGVNWSF (269 aa)) enclose the Autotransporter domain.

The protein resides in the cell outer membrane. In terms of biological role, upon overexpression shows increased adherence to polyvinyl chloride (PVC) plates, increased mature biofilm formation. In Escherichia coli (strain K12), this protein is Probable autotransporter YpjA (ypjA).